A 333-amino-acid polypeptide reads, in one-letter code: Probable cytosolic iron-sulfur protein assembly protein 1 (333 aa).

WD repeat units lie at residues 12–50, 55–94, 107–146, 153–192, 197–238, 250–288, and 298–333; these read LHDD…IIEE, AHKK…YNDE, GHEN…EEFE, EHSQ…WECC, GHEG…GEYE, AHTR…WIVE, and YETN…FDEN.

This sequence belongs to the WD repeat CIA1 family. As to quaternary structure, interacts with NAR1.

The protein resides in the cytoplasm. It is found in the nucleus. Functionally, essential component of the cytosolic iron-sulfur (Fe/S) protein assembly machinery. Required for the maturation of extramitochondrial Fe/S proteins. The chain is Probable cytosolic iron-sulfur protein assembly protein 1 from Kluyveromyces lactis (strain ATCC 8585 / CBS 2359 / DSM 70799 / NBRC 1267 / NRRL Y-1140 / WM37) (Yeast).